The following is a 471-amino-acid chain: Tryptophanase (471 aa).

At Lys256 the chain carries N6-(pyridoxal phosphate)lysine.

The protein belongs to the beta-eliminating lyase family. In terms of assembly, homotetramer. It depends on pyridoxal 5'-phosphate as a cofactor.

The enzyme catalyses L-tryptophan + H2O = indole + pyruvate + NH4(+). It functions in the pathway amino-acid degradation; L-tryptophan degradation via pyruvate pathway; indole and pyruvate from L-tryptophan: step 1/1. The protein is Tryptophanase of Salinibacter ruber (strain DSM 13855 / M31).